Reading from the N-terminus, the 400-residue chain is MGDWSFLGNILEQVNEQSTVIGRVWLTVLFIFRILILGTAAELVWGDEQSDFVCNTQQPGCENVCYDEAFPISHIRLWVLQIIFVSTPSLVYFGHAVHHVRMEEKRKEREEAERRQQAEVDEEKLPLAPNQNKGNNPDGTKKFRLEGTLLRTYILHIIFKTLFEVGFIVGQYFLYGFRILPLYRCGRWPCPNLVDCFVSRPTEKTIFIMFMLVVAAVSLFLNLVEISHLILKRIRRALRRPAEEQMGEVPEKPLHAIAVSSIPKAKGYKLLEEEKPVSHYFPLTEVGVEPSPLPSAFNEFEEKIGMGPLEDLSRAFDERLPSYAQAKEPEEEKVKAEEEEEQEEEQQAPQEEPGVKKAEEEVVSDEVEGPSAPAELATDVRSLSRLSKASSRARSDDLTV.

The stretch at 2 to 12 is an intramembrane region; it reads GDWSFLGNILE. Residues 13–21 are Cytoplasmic-facing; the sequence is QVNEQSTVI. Residues 22 to 42 traverse the membrane as a helical segment; that stretch reads GRVWLTVLFIFRILILGTAAE. The Extracellular segment spans residues 43–71; that stretch reads LVWGDEQSDFVCNTQQPGCENVCYDEAFP. Intrachain disulfides connect cysteine 54/cysteine 196, cysteine 61/cysteine 190, and cysteine 65/cysteine 185. The chain crosses the membrane as a helical span at residues 72-92; the sequence is ISHIRLWVLQIIFVSTPSLVY. Residues 93–156 are Cytoplasmic-facing; the sequence is FGHAVHHVRM…GTLLRTYILH (64 aa). A compositionally biased stretch (basic and acidic residues) spans 104–118; that stretch reads EKRKEREEAERRQQA. Positions 104-139 are disordered; sequence EKRKEREEAERRQQAEVDEEKLPLAPNQNKGNNPDG. Positions 129 to 138 are enriched in polar residues; sequence PNQNKGNNPD. Residues 157–177 traverse the membrane as a helical segment; that stretch reads IIFKTLFEVGFIVGQYFLYGF. At 178–205 the chain is on the extracellular side; it reads RILPLYRCGRWPCPNLVDCFVSRPTEKT. Residues 206-226 traverse the membrane as a helical segment; sequence IFIMFMLVVAAVSLFLNLVEI. Topologically, residues 227–400 are cytoplasmic; the sequence is SHLILKRIRR…SRARSDDLTV (174 aa). The segment at 323 to 400 is disordered; it reads YAQAKEPEEE…SRARSDDLTV (78 aa). Positions 327–336 are enriched in basic and acidic residues; sequence KEPEEEKVKA. The segment covering 337–346 has biased composition (acidic residues); it reads EEEEEQEEEQ. At serine 364 the chain carries Phosphoserine; by CK2. Residues 381–392 are compositionally biased toward low complexity; sequence RSLSRLSKASSR.

It belongs to the connexin family. Alpha-type (group II) subfamily. As to quaternary structure, a hemichannel or connexon is composed of a hexamer of connexins. A functional gap junction is formed by the apposition of two hemichannels. Forms heteromeric channels with GJA3. During early stages of lens development, interacts with the C-terminus of MIP. Post-translationally, proteolytically cleaved by caspase-3 during lens development. In terms of processing, phosphorylated on Ser-364; which inhibits cleavage by caspase-3.

The protein localises to the cell membrane. The protein resides in the cell junction. Its subcellular location is the gap junction. Its function is as follows. Structural component of eye lens gap junctions. Gap junctions are dodecameric channels that connect the cytoplasm of adjoining cells. They are formed by the docking of two hexameric hemichannels, one from each cell membrane. Small molecules and ions diffuse from one cell to a neighboring cell via the central pore. This Gallus gallus (Chicken) protein is Gap junction alpha-8 protein (GJA8).